The following is a 515-amino-acid chain: 2-isopropylmalate synthase (515 aa).

The Pyruvate carboxyltransferase domain occupies Ile-4–Lys-266. Mn(2+)-binding residues include Asp-13, His-201, His-203, and Asn-237. The regulatory domain stretch occupies residues Gln-391 to Gln-515.

This sequence belongs to the alpha-IPM synthase/homocitrate synthase family. LeuA type 1 subfamily. In terms of assembly, homodimer. Mn(2+) serves as cofactor.

The protein localises to the cytoplasm. It carries out the reaction 3-methyl-2-oxobutanoate + acetyl-CoA + H2O = (2S)-2-isopropylmalate + CoA + H(+). It participates in amino-acid biosynthesis; L-leucine biosynthesis; L-leucine from 3-methyl-2-oxobutanoate: step 1/4. Its function is as follows. Catalyzes the condensation of the acetyl group of acetyl-CoA with 3-methyl-2-oxobutanoate (2-ketoisovalerate) to form 3-carboxy-3-hydroxy-4-methylpentanoate (2-isopropylmalate). This is 2-isopropylmalate synthase from Geobacillus sp. (strain WCH70).